We begin with the raw amino-acid sequence, 910 residues long: Adhesion G-protein coupled receptor F1 (910 aa).

Positions 1-19 (MKVGVLWLISFFTFTDGHG) are cleaved as a signal peptide. The Extracellular portion of the chain corresponds to 20–583 (GFLGKNDGIK…SPFVPSTIFP (564 aa)). Residues N139, N168, N205, N282, N310, N317, N329, N354, N368, N389, N410, N423, N437, N455, N512, N528, and N553 are each glycosylated (N-linked (GlcNAc...) asparagine). The SEA domain maps to 148–256 (ERTKIWGTFK…GSFRVFGKAQ (109 aa)). Intrachain disulfides connect C257–C287 and C275–C299. Residues 437 to 579 (NKSQLKRGYS…SILMSPFVPS (143 aa)) form the GAIN-B domain. 2 cysteine pairs are disulfide-bonded: C534-C561 and C549-C563. A GPS region spans residues 534–579 (CVFWDFSHLQWNDAGCHLVNETQDIVTCQCTHLTSFSILMSPFVPS). A stachel region spans residues 568 to 576 (SFSILMSPF). A helical membrane pass occupies residues 584-609 (VVKWITYVGLGISIGSLILCLIIEAL). The Cytoplasmic portion of the chain corresponds to 610-621 (FWKQIKKSQTSH). A helical transmembrane segment spans residues 622 to 646 (TRRICMVNIALSLLIADVWFIVGAT). At 647-658 (VDTTVNPSGVCT) the chain is on the extracellular side. Cysteines 657 and 733 form a disulfide. The helical transmembrane segment at 659–684 (AAVFFTHFFYLSLFFWMLMLGILLAY) threads the bilayer. The Cytoplasmic portion of the chain corresponds to 685 to 696 (RIILVFHHMAQH). Residues 697–719 (LMMAVGFCLGYGCPLIISVITIA) traverse the membrane as a helical segment. Residues 720–742 (VTQPSNTYKRKDVCWLNWSNGSK) lie on the Extracellular side of the membrane. N736 and N739 each carry an N-linked (GlcNAc...) asparagine glycan. A helical transmembrane segment spans residues 743–767 (PLLAFVVPALAIVAVNFVVVLLVLT). Over 768 to 784 (KLWRPTVGERLSRDDKA) the chain is Cytoplasmic. Residues 785-813 (TIIRVGKSLLILTPLLGLTWGFGIGTIVD) traverse the membrane as a helical segment. At 814–816 (SQN) the chain is on the extracellular side. Residues 817-842 (LAWHVIFALLNAFQGFFILCFGILLD) traverse the membrane as a helical segment. Over 843 to 910 (SKLRQLLFNK…IMLTQFVSNE (68 aa)) the chain is Cytoplasmic.

This sequence belongs to the G-protein coupled receptor 2 family. Adhesion G-protein coupled receptor (ADGR) subfamily. Heterodimer of 2 chains generated by proteolytic processing; the large extracellular N-terminal fragment and the membrane-bound C-terminal fragment predominantly remain associated and non-covalently linked. Post-translationally, autoproteolytically processed at the GPS region of the GAIN-B domain; this cleavage modulates receptor activity. In terms of processing, glycosylated. Glycosylation at Asn-389 is required for secretion or folding. In terms of tissue distribution, mainly expressed in the kidney. Up-regulated in lung adenocarcinomas and prostate cancers.

Its subcellular location is the cell membrane. The protein resides in the secreted. Its activity is regulated as follows. Forms a heterodimer of 2 chains generated by proteolytic processing that remain associated through non-covalent interactions mediated by the GAIN-B domain. In the inactivated receptor, the Stachel sequence (also named stalk) is embedded in the GAIN-B domain, where it adopts a beta-strand conformation. On activation, the Stachel moves into the 7 transmembrane region and adopts a twisted hook-shaped configuration that forms contacts within the receptor, leading to coupling of a G-alpha protein, which activates signaling. The cleaved GAIN-B and N-terminal domains can then dissociate from the rest of the receptor. Adhesion G-protein coupled receptor (aGPCR) for N-docosahexaenoylethanolamine (synaptamide), an omega-3 fatty acid lipid highly enriched in the brain. Ligand binding causes a conformation change that triggers signaling via guanine nucleotide-binding proteins (G proteins) and modulates the activity of downstream effectors, such as adenylate cyclase. ADGRF1 is coupled to G(s) G proteins and mediates activation of adenylate cyclase activity. Also able to couple to G(q), G(i) and G(12)/G(13) G proteins; additional evidence is however required to confirm this result in vivo. Involved in the development of neurons and cognitive function. In liver, involved in fat accumulation. The protein is Adhesion G-protein coupled receptor F1 of Homo sapiens (Human).